The primary structure comprises 366 residues: Sigma54-dependent transcriptional activator SfnR (366 aa).

The region spanning 21 to 250 (QVFEDPRSQA…LENVIHHSLL (230 aa)) is the Sigma-54 factor interaction domain. ATP-binding positions include 49–56 (GETGTGKE) and 112–121 (ANGGTLFLDE).

Involved in the dimethyl sulfide degradation pathway. Activates the expression of sfnG and sfnF. In Pseudomonas putida (Arthrobacter siderocapsulatus), this protein is Sigma54-dependent transcriptional activator SfnR.